Reading from the N-terminus, the 388-residue chain is UTP--glucose-1-phosphate uridylyltransferase (388 aa).

Asp118 is a Mg(2+) binding site.

It belongs to the CugP-type UDP-glucose pyrophosphorylase family. Mg(2+) serves as cofactor.

It catalyses the reaction alpha-D-glucose 1-phosphate + UTP + H(+) = UDP-alpha-D-glucose + diphosphate. Functionally, catalyzes the formation of UDP-glucose, from UTP and glucose 1-phosphate. Is highly specific since it cannot use other NTPs such as dTTP, CTP, ATP, and GTP, and other sugar-1P such as GlcNAc-1P, Gal-1P, and Man-1P, as substrates. Has probably a central and essential role as the substrate supplier for galactolipid synthesis; galactolipids are major constituents of the photosynthetic thylakoid membrane and important for photosynthetic activity. The chain is UTP--glucose-1-phosphate uridylyltransferase from Synechocystis sp. (strain ATCC 27184 / PCC 6803 / Kazusa).